Consider the following 137-residue polypeptide: Diacylglycerol kinase (137 aa).

Glu42 contacts a divalent metal cation. 2 helical membrane passes run 49–67 and 73–89; these read LIAF…ATFF and AILF…NTAI. The active-site Proton acceptor is Glu83. Glu90 serves as a coordination point for a divalent metal cation. A helical transmembrane segment spans residues 112 to 132; it reads SFACLCLIVANGVYAAYVVIF.

Belongs to the bacterial diacylglycerol kinase family. It depends on Mg(2+) as a cofactor.

The protein localises to the cell inner membrane. It carries out the reaction a 1,2-diacyl-sn-glycerol + ATP = a 1,2-diacyl-sn-glycero-3-phosphate + ADP + H(+). Functionally, catalyzes the ATP-dependent phosphorylation of sn-l,2-diacylglycerol (DAG) to phosphatidic acid. Involved in the recycling of diacylglycerol produced as a by-product during membrane-derived oligosaccharide (MDO) biosynthesis. The sequence is that of Diacylglycerol kinase (dgkA) from Sinorhizobium sp.